We begin with the raw amino-acid sequence, 378 residues long: Metalloendoproteinase 2-MMP (378 aa).

An N-terminal signal peptide occupies residues 1-20; that stretch reads MRFCVFGFLSLFLIVSPASA. A propeptide spans 21 to 154 (activation peptide); sequence WFFPNSTAVP…SRTHLHAVKR (134 aa). Residues N25, N35, N46, N79, and N102 are each glycosylated (N-linked (GlcNAc...) asparagine). Residues 118 to 125 carry the Cysteine switch motif; that stretch reads PRCGNPDV. C120 contributes to the Zn(2+) binding site. 3 N-linked (GlcNAc...) asparagine glycosylation sites follow: N127, N143, and N203. H280 contacts Zn(2+). E281 is a catalytic residue. Zn(2+)-binding residues include H284 and H290. Residue N330 is glycosylated (N-linked (GlcNAc...) asparagine). The GPI-anchor amidated serine moiety is linked to residue S349. The propeptide at 350–378 is removed in mature form; that stretch reads AAWRIDGSSRSTIVSLLLSTVGLVLWFLP.

It belongs to the peptidase M10A family. Matrix metalloproteinases (MMPs) subfamily. Requires Zn(2+) as cofactor. In terms of tissue distribution, mostly expressed in roots, and, to a lower extent, in flowers, leaves and stems.

It localises to the cell membrane. Its activity is regulated as follows. Repressed by acetohydroxamic acid (AHA). In terms of biological role, matrix metalloproteinases (MMPs) or matrixins may play a role in the degradation and remodeling of the extracellular matrix (ECM) during development or in response to stresses. Required for plant growth, morphogenesis, and development with particular relevance for flowering and senescence. Active on McaPLGLDpaAR-NH(2) (QF24) and myelin basic protein (MBP) and, to some extent, on beta-casein. This Arabidopsis thaliana (Mouse-ear cress) protein is Metalloendoproteinase 2-MMP.